The chain runs to 685 residues: MNDSRQQSLFFITLPDLNKLCAVRIILSNKVADTEIRTIQMKMCRQLLFLHQDILTSPVSGILNQIWVVMAIPFYKARKLNAYVEKYGAKMEAPQRVIPVILQNCLSYSFMARLAPAWNRTGHLLIQGRDFLSQMGKQSAVVLNINVTETQVCLSIEACTIRLPAPELKEFEISQSIIKDFHANKHAVIERHSILSNWCYVLPSMKMGQIINIFHAIPAACPFHSYGDFQRHWDALYGYKLPGDCGKIKIYCNIYFKMLGERTFTYPLSCIRSQPMQFFPRVDSEVVLKSFLSDLKSKLPHICGFPIKMTSKPCYYTQELTKPNIQEHKVKPPNLTTKKMLRASLTQATSRKPACAQSLLPCSVAVDHKVELSVSQPTSGIFSALHLQPESVQGRKKSLSIRAPQVHSEVLMPNRGNTQVQHTNLSSQSNITPKFVPVFKNRLLQMNKNTSVLGSPKRKQHDVTQSKLFSLKTSMIQHDKLNLGPAIKNRYSSNIQMQAANNLNQENSRPLQEKNTESSENMTKFPSSRGKSTVSLNKNKQLSNSAVFVVSNNNLGVVKSAVDFQMKGKENLTGKGITQILGKSHGSLKLKRQPHIFESDGETEDPRLLQQQSENQAKEVGTSDHRLIVSKIAHRSKRKLCPESSKTSKKHHSDTVHYGQSSSSKKQILDSDKSKLKKSLIIHNA.

2 disordered regions span residues 502 to 538 (NLNQENSRPLQEKNTESSENMTKFPSSRGKSTVSLNK) and 635 to 685 (RSKR…IHNA). Polar residues predominate over residues 518–538 (SSENMTKFPSSRGKSTVSLNK). Residues 675–685 (KLKKSLIIHNA) show a composition bias toward basic residues.

This is an uncharacterized protein from Homo sapiens (Human).